The following is a 504-amino-acid chain: Maturase K (504 aa).

This sequence belongs to the intron maturase 2 family. MatK subfamily.

The protein resides in the plastid. The protein localises to the chloroplast. In terms of biological role, usually encoded in the trnK tRNA gene intron. Probably assists in splicing its own and other chloroplast group II introns. The polypeptide is Maturase K (Carpinus betulus (European hornbeam)).